The chain runs to 79 residues: RNA-binding protein Hfq (79 aa).

In terms of domain architecture, Sm spans 10 to 69; it reads DPFLNALRKEHVPVSIYLVNGIKLQGNIESFDQYVVLLRNTVTQMVYKHAISTVVPARAV.

The protein belongs to the Hfq family. As to quaternary structure, homohexamer.

Functionally, RNA chaperone that binds small regulatory RNA (sRNAs) and mRNAs to facilitate mRNA translational regulation in response to envelope stress, environmental stress and changes in metabolite concentrations. Also binds with high specificity to tRNAs. The polypeptide is RNA-binding protein Hfq (Ralstonia nicotianae (strain ATCC BAA-1114 / GMI1000) (Ralstonia solanacearum)).